The primary structure comprises 251 residues: Imidazole glycerol phosphate synthase subunit HisF (251 aa).

Catalysis depends on residues D11 and D130.

Belongs to the HisA/HisF family. Heterodimer of HisH and HisF.

Its subcellular location is the cytoplasm. It catalyses the reaction 5-[(5-phospho-1-deoxy-D-ribulos-1-ylimino)methylamino]-1-(5-phospho-beta-D-ribosyl)imidazole-4-carboxamide + L-glutamine = D-erythro-1-(imidazol-4-yl)glycerol 3-phosphate + 5-amino-1-(5-phospho-beta-D-ribosyl)imidazole-4-carboxamide + L-glutamate + H(+). Its pathway is amino-acid biosynthesis; L-histidine biosynthesis; L-histidine from 5-phospho-alpha-D-ribose 1-diphosphate: step 5/9. In terms of biological role, IGPS catalyzes the conversion of PRFAR and glutamine to IGP, AICAR and glutamate. The HisF subunit catalyzes the cyclization activity that produces IGP and AICAR from PRFAR using the ammonia provided by the HisH subunit. This Bacteroides thetaiotaomicron (strain ATCC 29148 / DSM 2079 / JCM 5827 / CCUG 10774 / NCTC 10582 / VPI-5482 / E50) protein is Imidazole glycerol phosphate synthase subunit HisF.